We begin with the raw amino-acid sequence, 594 residues long: Elongation factor 4 (594 aa).

One can recognise a tr-type G domain in the interval 2 to 184 (KNIRNFSIIA…TIVAKVPAPE (183 aa)). GTP-binding positions include 14 to 19 (DHGKST) and 131 to 134 (NKID).

This sequence belongs to the TRAFAC class translation factor GTPase superfamily. Classic translation factor GTPase family. LepA subfamily.

The protein localises to the cell inner membrane. It catalyses the reaction GTP + H2O = GDP + phosphate + H(+). Its function is as follows. Required for accurate and efficient protein synthesis under certain stress conditions. May act as a fidelity factor of the translation reaction, by catalyzing a one-codon backward translocation of tRNAs on improperly translocated ribosomes. Back-translocation proceeds from a post-translocation (POST) complex to a pre-translocation (PRE) complex, thus giving elongation factor G a second chance to translocate the tRNAs correctly. Binds to ribosomes in a GTP-dependent manner. This is Elongation factor 4 from Francisella tularensis subsp. tularensis (strain WY96-3418).